The following is a 503-amino-acid chain: Aminoaldehyde dehydrogenase 1, peroxisomal (503 aa).

The Na(+) site is built by I28, D99, and L189. An NAD(+)-binding site is contributed by 238–245; the sequence is GSTMTGSK. E260 (proton acceptor) is an active-site residue. 2 residues coordinate NAD(+): C294 and E393. C294 acts as the Nucleophile in catalysis.

The protein belongs to the aldehyde dehydrogenase family. As to expression, expressed in leaves, flowers and fruits.

The protein localises to the cytoplasm. It is found in the cytosol. The catalysed reaction is 4-aminobutanal + NAD(+) + H2O = 4-aminobutanoate + NADH + 2 H(+). It catalyses the reaction 3-aminopropanal + NAD(+) + H2O = beta-alanine + NADH + 2 H(+). Its pathway is amine and polyamine biosynthesis; betaine biosynthesis via choline pathway; betaine from betaine aldehyde: step 1/1. Dehydrogenase that catalyzes the oxidation of several aminoaldehydes. Metabolizes and detoxifies aldehyde products of polyamine degradation to non-toxic amino acids. Catalyzes the oxidation of 4-aminobutanal and 3-aminopropanal to 4-aminobutanoate and beta-alanine, respectively. The chain is Aminoaldehyde dehydrogenase 1, peroxisomal from Malus domestica (Apple).